We begin with the raw amino-acid sequence, 67 residues long: MKVNDLVTVKTDGKTRREGTILAVETFQEGIMYLVALKDYPAGIWFFNEADSKDGTFVEPKTLPDEE.

It belongs to the DsrB family.

The sequence is that of Protein DsrB from Pectobacterium carotovorum subsp. carotovorum (strain PC1).